The following is a 289-amino-acid chain: uncharacterized protein (289 aa).

This is an uncharacterized protein from Archaeoglobus fulgidus (strain ATCC 49558 / DSM 4304 / JCM 9628 / NBRC 100126 / VC-16).